The following is a 199-amino-acid chain: Holliday junction branch migration complex subunit RuvA (199 aa).

A domain I region spans residues 1-65; sequence MIASLRGKLL…DRGQRLFGFG (65 aa). The tract at residues 66-144 is domain II; the sequence is SKKDRESFEL…KFEMFLNEGT (79 aa). The interval 145–155 is flexible linker; the sequence is TESSFVDRETD. Residues 155–199 are domain III; that stretch reads DLATLALIQLGFDEKSATKQVADAKKLNPGLSASDIVKQVITGTR.

This sequence belongs to the RuvA family. Homotetramer. Forms an RuvA(8)-RuvB(12)-Holliday junction (HJ) complex. HJ DNA is sandwiched between 2 RuvA tetramers; dsDNA enters through RuvA and exits via RuvB. An RuvB hexamer assembles on each DNA strand where it exits the tetramer. Each RuvB hexamer is contacted by two RuvA subunits (via domain III) on 2 adjacent RuvB subunits; this complex drives branch migration. In the full resolvosome a probable DNA-RuvA(4)-RuvB(12)-RuvC(2) complex forms which resolves the HJ.

The protein localises to the cytoplasm. The RuvA-RuvB-RuvC complex processes Holliday junction (HJ) DNA during genetic recombination and DNA repair, while the RuvA-RuvB complex plays an important role in the rescue of blocked DNA replication forks via replication fork reversal (RFR). RuvA specifically binds to HJ cruciform DNA, conferring on it an open structure. The RuvB hexamer acts as an ATP-dependent pump, pulling dsDNA into and through the RuvAB complex. HJ branch migration allows RuvC to scan DNA until it finds its consensus sequence, where it cleaves and resolves the cruciform DNA. The protein is Holliday junction branch migration complex subunit RuvA of Leptospira biflexa serovar Patoc (strain Patoc 1 / Ames).